Reading from the N-terminus, the 171-residue chain is Ribosome maturation factor RimP (171 aa).

It belongs to the RimP family.

The protein localises to the cytoplasm. Required for maturation of 30S ribosomal subunits. This is Ribosome maturation factor RimP from Anaeromyxobacter dehalogenans (strain 2CP-C).